A 1056-amino-acid polypeptide reads, in one-letter code: Kinesin-like protein KIN-5A (1056 aa).

The interval 1-44 (MDRRIGLTSPSPKSTEKSGRDLRSGGDANGGANTNSNSIPRGDK) is disordered. Over residues 14–24 (STEKSGRDLRS) the composition is skewed to basic and acidic residues. In terms of domain architecture, Kinesin motor spans 49–395 (NVQVILRCRP…LDYAHRAKNI (347 aa)). 135–142 (GQTGTGKT) contacts ATP. Residues 443–525 (QEEAEKKAMT…STIKEKEYVI (83 aa)) are a coiled coil.

It belongs to the TRAFAC class myosin-kinesin ATPase superfamily. Kinesin family. KIN-5/BimC subfamily.

It is found in the cytoplasm. The protein localises to the cytoskeleton. Its subcellular location is the spindle. In terms of biological role, responsible for microtubule translocation. May be important for the organization of phragmoplast-specific arrays of microtubules. Plays an essential role in stabilizing the mitotic spindle. Required during mitotic cytokinesis. The chain is Kinesin-like protein KIN-5A from Oryza sativa subsp. japonica (Rice).